We begin with the raw amino-acid sequence, 632 residues long: Putative ankyrin repeat protein L767 (632 aa).

ANK repeat units lie at residues 61-97 (YGNTFMTNRIIKNTKYSLLDVNTVQMLLDYGDPDYEF), 228-250 (FDNEKLFYTVLYDSFELTKYIVE), 251-282 (KGFYYDFDSVINSDINLEMLKFFIELGNNLTD), 345-374 (NLDILMKTSILRENINMIKKCIEYGINVDD), and 517-546 (NSIELLFVVVLSENIDLFKLLLEINCNDTD).

In Acanthamoeba polyphaga mimivirus (APMV), this protein is Putative ankyrin repeat protein L767.